The following is a 593-amino-acid chain: 3-hydroxy-3-methylglutaryl-coenzyme A reductase (593 aa).

The interval methionine 1–valine 36 is disordered. Helical transmembrane passes span leucine 52–valine 72 and alanine 94–valine 114. Positions glutamine 115 to glutamate 177 are linker. Positions glutamate 178–serine 593 are catalytic. Glutamate 272 (charge relay system) is an active-site residue. Residue asparagine 336 is glycosylated (N-linked (GlcNAc...) asparagine). The active-site Charge relay system is the lysine 404. Asparagine 449 carries an N-linked (GlcNAc...) asparagine glycan. Aspartate 480 (charge relay system) is an active-site residue. Histidine 578 functions as the Proton donor in the catalytic mechanism. Asparagine 582 carries N-linked (GlcNAc...) asparagine glycosylation.

Belongs to the HMG-CoA reductase family.

It is found in the endoplasmic reticulum membrane. The enzyme catalyses (R)-mevalonate + 2 NADP(+) + CoA = (3S)-3-hydroxy-3-methylglutaryl-CoA + 2 NADPH + 2 H(+). Its pathway is metabolic intermediate biosynthesis; (R)-mevalonate biosynthesis; (R)-mevalonate from acetyl-CoA: step 3/3. Catalyzes the synthesis of mevalonate. The specific precursor of all isoprenoid compounds present in plants. This is 3-hydroxy-3-methylglutaryl-coenzyme A reductase from Camptotheca acuminata (Happy tree).